A 182-amino-acid polypeptide reads, in one-letter code: Auxin-responsive protein IAA9 (182 aa).

The disordered stretch occupies residues 1–41 (MELELGLAPPNSGHLVVDELSSSSSSGGGSGSAPVSASSAG). Positions 3–7 (LELGL) match the EAR-like (transcriptional repression) motif. The segment covering 32-41 (SAPVSASSAG) has biased composition (low complexity). Positions 92–182 (ANYVKVKKEG…RSVKRLKILG (91 aa)) constitute a PB1 domain.

Belongs to the Aux/IAA family. In terms of assembly, homodimers and heterodimers. Expressed in etiolated shoots and flowers.

It is found in the nucleus. In terms of biological role, aux/IAA proteins are short-lived transcriptional factors that function as repressors of early auxin response genes at low auxin concentrations. The chain is Auxin-responsive protein IAA9 (IAA9) from Oryza sativa subsp. japonica (Rice).